A 416-amino-acid polypeptide reads, in one-letter code: Phosphoglycerate kinase (416 aa).

Residues V23, D24, F25, N26, Q38, R39, S62, H63, G65, R66, L121, R122, H168, and R169 each coordinate (2R)-3-phosphoglycerate. G212 serves as a coordination point for ADP. G212 provides a ligand contact to CDP. AMP-binding residues include A213 and K214. A213 is a binding site for ATP. A213 lines the Mg(2+) pocket. D217 is a binding site for CDP. D217 lines the Mg(2+) pocket. K218 contributes to the AMP binding site. K218 serves as a coordination point for ATP. ADP is bound at residue G236. G236 serves as a coordination point for CDP. Residues G237 and G311 each contribute to the AMP site. G237 and G311 together coordinate ATP. Residues G336 and F341 each contribute to the CDP site. F341 is an ADP binding site. Residue E342 coordinates AMP. 3 residues coordinate ATP: E342, D373, and T374. D373 lines the Mg(2+) pocket.

Belongs to the phosphoglycerate kinase family. Monomer. Requires Mg(2+) as cofactor.

It localises to the cytoplasm. The protein resides in the mitochondrion. It carries out the reaction (2R)-3-phosphoglycerate + ATP = (2R)-3-phospho-glyceroyl phosphate + ADP. It functions in the pathway carbohydrate degradation; glycolysis; pyruvate from D-glyceraldehyde 3-phosphate: step 2/5. In terms of biological role, catalyzes one of the two ATP producing reactions in the glycolytic pathway via the reversible conversion of 1,3-diphosphoglycerate to 3-phosphoglycerate. Both L- and D- forms of purine and pyrimidine nucleotides can be used as substrates, but the activity is much lower on pyrimidines. Negatively regulates the biosynthesis of acetyl-CoA from pyruvate in the mitochondrion. The chain is Phosphoglycerate kinase (PGK1) from Debaryomyces hansenii (strain ATCC 36239 / CBS 767 / BCRC 21394 / JCM 1990 / NBRC 0083 / IGC 2968) (Yeast).